The sequence spans 152 residues: Large ribosomal subunit protein bL9 (152 aa).

Belongs to the bacterial ribosomal protein bL9 family.

In terms of biological role, binds to the 23S rRNA. In Rippkaea orientalis (strain PCC 8801 / RF-1) (Cyanothece sp. (strain PCC 8801)), this protein is Large ribosomal subunit protein bL9.